A 374-amino-acid chain; its full sequence is Glyceraldehyde-3-phosphate dehydrogenase A, chloroplastic (374 aa).

The transit peptide at methionine 1–alanine 34 directs the protein to the chloroplast. Residues arginine 47–isoleucine 48, aspartate 71, and arginine 116 contribute to the NADP(+) site. Cysteine 55 and cysteine 325 form a disulfide bridge. Residues serine 189 to threonine 191, threonine 220, arginine 235, threonine 248 to glycine 249, and arginine 271 each bind D-glyceraldehyde 3-phosphate. The active-site Nucleophile is cysteine 190. Asparagine 353 is a binding site for NADP(+).

This sequence belongs to the glyceraldehyde-3-phosphate dehydrogenase family. In terms of assembly, homotetramer. Component of a complex that contains two dimers of PRK, two tetramers of GAPDH and CP12. CP12 associates with GAPDH, causing its conformation to change. This GAPDH/CP12 complex binds PRK to form a half-complex (one unit). This unit probably dimerizes due partially to interactions between the enzymes of each unit.

It localises to the plastid. Its subcellular location is the chloroplast. It carries out the reaction D-glyceraldehyde 3-phosphate + phosphate + NADP(+) = (2R)-3-phospho-glyceroyl phosphate + NADPH + H(+). It functions in the pathway carbohydrate biosynthesis; Calvin cycle. The chain is Glyceraldehyde-3-phosphate dehydrogenase A, chloroplastic (GAPA) from Chlamydomonas reinhardtii (Chlamydomonas smithii).